Consider the following 267-residue polypeptide: Glutamate 5-kinase (267 aa).

Lys-14 lines the ATP pocket. Residues Ser-54, Asp-141, and Asn-157 each contribute to the substrate site. ATP is bound by residues 177-178 and 219-225; these read SD and TGGMMSK.

It belongs to the glutamate 5-kinase family.

It is found in the cytoplasm. It carries out the reaction L-glutamate + ATP = L-glutamyl 5-phosphate + ADP. It participates in amino-acid biosynthesis; L-proline biosynthesis; L-glutamate 5-semialdehyde from L-glutamate: step 1/2. Functionally, catalyzes the transfer of a phosphate group to glutamate to form L-glutamate 5-phosphate. The polypeptide is Glutamate 5-kinase (Streptococcus thermophilus (strain CNRZ 1066)).